The primary structure comprises 356 residues: UDP-N-acetylglucosamine--N-acetylmuramyl-(pentapeptide) pyrophosphoryl-undecaprenol N-acetylglucosamine transferase (356 aa).

UDP-N-acetyl-alpha-D-glucosamine-binding residues include S198 and Q289.

This sequence belongs to the glycosyltransferase 28 family. MurG subfamily.

Its subcellular location is the cell membrane. It carries out the reaction Mur2Ac(oyl-L-Ala-gamma-D-Glu-L-Lys-D-Ala-D-Ala)-di-trans,octa-cis-undecaprenyl diphosphate + UDP-N-acetyl-alpha-D-glucosamine = beta-D-GlcNAc-(1-&gt;4)-Mur2Ac(oyl-L-Ala-gamma-D-Glu-L-Lys-D-Ala-D-Ala)-di-trans,octa-cis-undecaprenyl diphosphate + UDP + H(+). The protein operates within cell wall biogenesis; peptidoglycan biosynthesis. Cell wall formation. Catalyzes the transfer of a GlcNAc subunit on undecaprenyl-pyrophosphoryl-MurNAc-pentapeptide (lipid intermediate I) to form undecaprenyl-pyrophosphoryl-MurNAc-(pentapeptide)GlcNAc (lipid intermediate II). This is UDP-N-acetylglucosamine--N-acetylmuramyl-(pentapeptide) pyrophosphoryl-undecaprenol N-acetylglucosamine transferase from Streptococcus thermophilus (strain ATCC BAA-491 / LMD-9).